The chain runs to 335 residues: Probable deoxyhypusine synthase (335 aa).

K307 serves as the catalytic Nucleophile.

The protein belongs to the deoxyhypusine synthase family. Requires NAD(+) as cofactor.

It catalyses the reaction [eIF5A protein]-L-lysine + spermidine = [eIF5A protein]-deoxyhypusine + propane-1,3-diamine. It participates in protein modification; eIF5A hypusination. Catalyzes the NAD-dependent oxidative cleavage of spermidine and the subsequent transfer of the butylamine moiety of spermidine to the epsilon-amino group of a specific lysine residue of the eIF-5A precursor protein to form the intermediate deoxyhypusine residue. The protein is Probable deoxyhypusine synthase (dys) of Pyrococcus abyssi (strain GE5 / Orsay).